Reading from the N-terminus, the 309-residue chain is Minor serine/threonine-protein phosphatase PP2A-1 catalytic subunit (309 aa).

Mn(2+) is bound by residues Asp-57, His-59, Asp-85, and Asn-117. His-118 (proton donor) is an active-site residue. Residues His-167 and His-241 each coordinate Mn(2+). A Leucine methyl ester modification is found at Leu-309.

This sequence belongs to the PPP phosphatase family. PP-2A subfamily. The cofactor is Mn(2+).

It carries out the reaction O-phospho-L-seryl-[protein] + H2O = L-seryl-[protein] + phosphate. The catalysed reaction is O-phospho-L-threonyl-[protein] + H2O = L-threonyl-[protein] + phosphate. Functionally, essential role in cell cycle control. PP2A may be involved in controlling the entry into mitosis, possibly acting as an inhibitor. The protein is Minor serine/threonine-protein phosphatase PP2A-1 catalytic subunit (ppa1) of Schizosaccharomyces pombe (strain 972 / ATCC 24843) (Fission yeast).